A 184-amino-acid polypeptide reads, in one-letter code: Elongation factor P (184 aa).

It belongs to the elongation factor P family.

It is found in the cytoplasm. It functions in the pathway protein biosynthesis; polypeptide chain elongation. Involved in peptide bond synthesis. Stimulates efficient translation and peptide-bond synthesis on native or reconstituted 70S ribosomes in vitro. Probably functions indirectly by altering the affinity of the ribosome for aminoacyl-tRNA, thus increasing their reactivity as acceptors for peptidyl transferase. In Paracidovorax citrulli (strain AAC00-1) (Acidovorax citrulli), this protein is Elongation factor P.